The following is a 278-amino-acid chain: Undecaprenyl-diphosphatase 2 (278 aa).

A run of 7 helical transmembrane segments spans residues 1-21 (MSII…FLPI), 38-58 (FPGF…VILY), 85-105 (FMFA…GLLL), 118-138 (FIAG…RFFV), 191-211 (SFLL…GDLL), 223-243 (PLII…IWLI), and 251-271 (LIYF…YFDH).

This sequence belongs to the UppP family.

The protein resides in the cell membrane. It carries out the reaction di-trans,octa-cis-undecaprenyl diphosphate + H2O = di-trans,octa-cis-undecaprenyl phosphate + phosphate + H(+). Its function is as follows. Catalyzes the dephosphorylation of undecaprenyl diphosphate (UPP). Confers resistance to bacitracin. In Halalkalibacterium halodurans (strain ATCC BAA-125 / DSM 18197 / FERM 7344 / JCM 9153 / C-125) (Bacillus halodurans), this protein is Undecaprenyl-diphosphatase 2.